Here is a 976-residue protein sequence, read N- to C-terminus: Vacuolar membrane protease (976 aa).

The Cytoplasmic segment spans residues 1–15; that stretch reads MKLKSVFRSVLKYRK. The chain crosses the membrane as a helical span at residues 16–36; it reads TNLSLLLLITYSIITLLYIFD. At 37–359 the chain is on the vacuolar side; sequence HERYKLNLPK…KFFVISAKTL (323 aa). 2 N-linked (GlcNAc...) asparagine glycosylation sites follow: Asn-96 and Asn-121. 2 residues coordinate Zn(2+): His-156 and Asp-168. A glycan (N-linked (GlcNAc...) asparagine) is linked at Asn-189. Glu-200 serves as the catalytic Proton acceptor. Glu-201 lines the Zn(2+) pocket. Asn-212 and Asn-217 each carry an N-linked (GlcNAc...) asparagine glycan. Residues Glu-226 and His-300 each contribute to the Zn(2+) site. The chain crosses the membrane as a helical span at residues 360–380; that stretch reads FYWNCIFLLVSPVVAIGLYLI. Residues 381–392 are Cytoplasmic-facing; the sequence is SRDRMTWKSHSW. A helical membrane pass occupies residues 393–412; it reads LSWTRFPLSLAAGIIVQKLF. Over 413–428 the chain is Vacuolar; sequence SNDIIRSNPLTFSRNY. Residues 429-449 form a helical membrane-spanning segment; sequence FWPISAFFTQVIFTSYVLINC. Topologically, residues 450 to 461 are cytoplasmic; sequence SNFFFPCADMKS. The chain crosses the membrane as a helical span at residues 462-482; sequence LSIIELFIILWTILLFTSKLL. The Vacuolar segment spans residues 483–496; sequence YSSDYRYTGLYPLS. The helical transmembrane segment at 497-517 threads the bilayer; it reads IFFLLSTIAAILRLLALALGM. Residues 518–627 lie on the Cytoplasmic side of the membrane; the sequence is RTRKRLGREC…NSLKLEYTDY (110 aa). The segment at 528–610 is disordered; sequence RDHHSNYSSH…PLLKGSNSME (83 aa). Over residues 549 to 558 the composition is skewed to polar residues; that stretch reads NLEQPQDQFT. Positions 559–570 are enriched in low complexity; sequence SSQDDQASIQDD. Residues 582–601 are compositionally biased toward basic and acidic residues; it reads NVDEDHGMDSSSQQHDERVP. The helical transmembrane segment at 628-648 threads the bilayer; that stretch reads AWIIQFLLIVPIPSFILFNSV. Over 649-668 the chain is Vacuolar; sequence DVIMDALNHTVQEGSKATFD. The N-linked (GlcNAc...) asparagine glycan is linked to Asn-656. The chain crosses the membrane as a helical span at residues 669-689; the sequence is VLRFGMVGSILMALPILPFFY. Over 690-692 the chain is Cytoplasmic; the sequence is KVN. The chain crosses the membrane as a helical span at residues 693-713; the sequence is YITISLTALLFLISASKTLLV. Topologically, residues 714-976 are vacuolar; it reads HPFTNSNPLK…LVIVKDAIIL (263 aa). N-linked (GlcNAc...) asparagine glycans are attached at residues Asn-768, Asn-796, Asn-811, Asn-866, and Asn-937.

Belongs to the peptidase M28 family. Zn(2+) is required as a cofactor.

Its subcellular location is the vacuole membrane. May be involved in vacuolar sorting and osmoregulation. This chain is Vacuolar membrane protease, found in Saccharomyces cerevisiae (strain Lalvin EC1118 / Prise de mousse) (Baker's yeast).